A 143-amino-acid chain; its full sequence is UPF0299 membrane protein CGSHiEE_04225 (143 aa).

The next 4 helical transmembrane spans lie at Met-1–Leu-21, Val-33–Ile-52, Gly-60–Ile-80, and Ile-92–Gly-112.

The protein belongs to the UPF0299 family.

The protein resides in the cell inner membrane. This chain is UPF0299 membrane protein CGSHiEE_04225, found in Haemophilus influenzae (strain PittEE).